The chain runs to 257 residues: Ribosome-associated protein quality control protein P2 (257 aa).

The tract at residues 1–74 (MSDIYQHFRK…RAERKRAILF (74 aa)) is N-terminal domain. Positions 87–166 (LQAFNVRYAD…EKIDLSDLNI (80 aa)) are central region. The S4 RNA-binding domain maps to 181–251 (LRLDAVCASM…GKTKKDKWRV (71 aa)).

In the presence of chloramphenicol (a translation elongation inhibitor), but not erythromycin or lincomycin, associates with 50S ribosomal subunits with or without a tRNA in the P-site. The S4 domain binds in a similar position to RqcP.

Its subcellular location is the cytoplasm. Part of the ribosome quality control system (RQC), a ribosome-associated complex that mediates the extraction of incompletely synthesized nascent chains from stalled ribosomes and their subsequent degradation. RqcH recruits Ala-charged tRNA, and with RqcP directs the elongation of stalled nascent chains on 50S ribosomal subunits, leading to non-templated C-terminal alanine extensions (Ala tail). The Ala tail promotes nascent chain degradation. RqcP2 (YlmH) overexpression can compensate for RqcP's role in Ala tailing during RQC, restoring Ala tail addition to peptides in stalled ribosomes. Overexpression complements a double ssrA-rqcP double deletion, but not an ssrA-rqcH double deletion. In terms of biological role, the majority of tagged protein is associated with tRNA-less 50S subunits, suggesting it might also play a role in late stage 50S subunit biogenesis. This Bacillus subtilis (strain 168) protein is Ribosome-associated protein quality control protein P2.